Reading from the N-terminus, the 968-residue chain is Alanine--tRNA ligase, cytoplasmic (968 aa).

ATP contacts are provided by residues Arg-77, His-95, Trp-176, and 214–216 (IWN). 2 residues coordinate L-alanine: Asn-216 and Asp-239. Gly-243 serves as a coordination point for ATP. The Zn(2+) site is built by His-606, His-610, Cys-724, and His-728.

The protein belongs to the class-II aminoacyl-tRNA synthetase family. Monomer. Zn(2+) is required as a cofactor.

The protein localises to the cytoplasm. It carries out the reaction tRNA(Ala) + L-alanine + ATP = L-alanyl-tRNA(Ala) + AMP + diphosphate. Catalyzes the attachment of alanine to tRNA(Ala) in a two-step reaction: alanine is first activated by ATP to form Ala-AMP and then transferred to the acceptor end of tRNA(Ala). Also edits incorrectly charged tRNA(Ala) via its editing domain. The chain is Alanine--tRNA ligase, cytoplasmic from Caenorhabditis elegans.